The following is a 467-amino-acid chain: Mitochondrial distribution and morphology protein 10 (467 aa).

It belongs to the MDM10 family. As to quaternary structure, component of the ER-mitochondria encounter structure (ERMES) or MDM complex, composed of MMM1, MDM10, MDM12 and MDM34. Associates with the mitochondrial outer membrane sorting assembly machinery SAM(core) complex.

The protein resides in the mitochondrion outer membrane. Its function is as follows. Component of the ERMES/MDM complex, which serves as a molecular tether to connect the endoplasmic reticulum and mitochondria. Components of this complex are involved in the control of mitochondrial shape and protein biogenesis and may function in phospholipid exchange. MDM10 is involved in the late assembly steps of the general translocase of the mitochondrial outer membrane (TOM complex). Functions in the TOM40-specific route of the assembly of outer membrane beta-barrel proteins, including the association of TOM40 with the receptor TOM22 and small TOM proteins. Can associate with the SAM(core) complex as well as the MDM12-MMM1 complex, both involved in late steps of the major beta-barrel assembly pathway, that is responsible for biogenesis of all outer membrane beta-barrel proteins. May act as a switch that shuttles between both complexes and channels precursor proteins into the TOM40-specific pathway. Plays a role in mitochondrial morphology and in the inheritance of mitochondria. This chain is Mitochondrial distribution and morphology protein 10, found in Ajellomyces capsulatus (strain G186AR / H82 / ATCC MYA-2454 / RMSCC 2432) (Darling's disease fungus).